A 707-amino-acid chain; its full sequence is Complement C1r-A subcomponent (707 aa).

Positions 1–16 (MWLFALLVTLFYGVEG) are cleaved as a signal peptide. Residues 17-140 (SIYLPQKLYG…KGFLAYYQAV (124 aa)) form the CUB 1 domain. Residues Glu-65, Asp-73, and Asp-118 each contribute to the Ca(2+) site. Cysteines 70 and 88 form a disulfide. N-linked (GlcNAc...) asparagine glycosylation is present at Asn-124. Residues Asp-141, Leu-142, and Glu-144 each contribute to the Ca(2+) site. The region spanning 141 to 189 (DLDECASQPNSVEEGLQPRCQHLCHNYVGGYFCSCHPGYELQKDGQSCQ) is the EGF-like; calcium-binding domain. 4 disulfides stabilise this stretch: Cys-145/Cys-164, Cys-160/Cys-173, Cys-175/Cys-188, and Cys-192/Cys-219. The Ca(2+) site is built by Asn-166, Tyr-167, and Gly-170. The residue at position 166 (Asn-166) is a (3R)-3-hydroxyasparagine. The region spanning 192–304 (CSSELYTEPS…RGWKLHYTTE (113 aa)) is the CUB 2 domain. Ser-205 carries the post-translational modification Phosphoserine; by CK2. Asn-220 carries an N-linked (GlcNAc...) asparagine glycan. Residues Asp-242, Asp-252, Asp-289, and Asp-293 each contribute to the Ca(2+) site. Cys-249 and Cys-267 are disulfide-bonded. 2 Sushi domains span residues 306 to 372 (IKCP…RCKI) and 373 to 448 (KNCG…RCLP). Intrachain disulfides connect Cys-308–Cys-357, Cys-337–Cys-370, Cys-375–Cys-428, Cys-405–Cys-446, and Cys-450–Cys-579. The 242-residue stretch at 463–704 (IIRGQPARPG…YVDWIKKEMG (242 aa)) folds into the Peptidase S1 domain. Active-site charge relay system residues include His-501 and Asp-559. Asn-583 carries N-linked (GlcNAc...) asparagine glycosylation. Intrachain disulfides connect Cys-622/Cys-641 and Cys-652/Cys-682. The Charge relay system role is filled by Ser-656.

Belongs to the peptidase S1 family. In terms of assembly, core component of the complement C1 complex, a calcium-dependent complex composed of 1 molecule of the C1Q subcomplex, 2 molecules of C1R and 2 molecules of C1S. The C1Q subcomplex is composed 18 subunits: 3 chains of C1QA, C1QB, and C1QC trimerize to form 6 collagen-like triple helices connected to six globular ligand-recognition modules. Within the C1 complex, C1R is a dimer of identical chains, each of which is activated by cleavage into two chains, heavy and light, connected by disulfide bonds. Cleaved and activated by autocatalytic processing to generate Complement C1r subcomponent heavy and light chains that are connected by disulfide bonds. In terms of processing, the iron and 2-oxoglutarate dependent 3-hydroxylation of aspartate and asparagine is (R) stereospecific within EGF domains.

It is found in the secreted. The protein localises to the cell surface. It carries out the reaction Selective cleavage of Lys(or Arg)-|-Ile bond in complement subcomponent C1s to form the active form of C1s (EC 3.4.21.42).. Its activity is regulated as follows. Activated by the C1Q subcomplex of the C1 complex following C1Q binding to immunoglobulins (IgG or IgM) complexed with antigens to form antigen-antibody complexes on the surface of pathogens. Immunoglobulin-binding promotes autoactivation of C1R, which results in the cleavage of the Arg-Ile bond in the catalytic domain. Serine protease component of the complement C1 complex, a multiprotein complex that initiates the classical pathway of the complement system, a cascade of proteins that leads to phagocytosis and breakdown of pathogens and signaling that strengthens the adaptive immune system. C1R catalyzes the first enzymatic step in the classical complement pathway: it is activated by the C1Q subcomplex of the C1 complex, which associates with IgG or IgM immunoglobulins complexed with antigens to form antigen-antibody complexes on the surface of pathogens. Immunoglobulin-binding promotes the autocatalytic cleavage and activation of C1R. Activated C1R then cleaves and activates C1S, the second protease of the classical complement pathway. It is unclear if C1R activates C1S within single, strained C1 complexes or between neighboring C1 complexes on surfaces. In Mus musculus (Mouse), this protein is Complement C1r-A subcomponent (C1ra).